The chain runs to 445 residues: C4-dicarboxylate transport protein (445 aa).

The next 8 helical transmembrane spans lie at 17 to 37 (FYQI…LLGY), 56 to 76 (LVKM…IAAM), 91 to 111 (VYFL…SHIV), 157 to 177 (FVGG…LSLA), 200 to 220 (LVAI…AFTI), 233 to 253 (MLVG…LGMV), 319 to 339 (IYMT…LSLG), and 367 to 387 (AATL…ILGV).

This sequence belongs to the dicarboxylate/amino acid:cation symporter (DAACS) (TC 2.A.23) family.

The protein localises to the cell inner membrane. In terms of biological role, responsible for the transport of dicarboxylates such as succinate, fumarate, and malate from the periplasm across the membrane. This chain is C4-dicarboxylate transport protein, found in Bordetella avium (strain 197N).